Here is a 180-residue protein sequence, read N- to C-terminus: ATP synthase subunit delta (180 aa).

This sequence belongs to the ATPase delta chain family. F-type ATPases have 2 components, F(1) - the catalytic core - and F(0) - the membrane proton channel. F(1) has five subunits: alpha(3), beta(3), gamma(1), delta(1), epsilon(1). F(0) has three main subunits: a(1), b(2) and c(10-14). The alpha and beta chains form an alternating ring which encloses part of the gamma chain. F(1) is attached to F(0) by a central stalk formed by the gamma and epsilon chains, while a peripheral stalk is formed by the delta and b chains.

It localises to the cell membrane. Functionally, f(1)F(0) ATP synthase produces ATP from ADP in the presence of a proton or sodium gradient. F-type ATPases consist of two structural domains, F(1) containing the extramembraneous catalytic core and F(0) containing the membrane proton channel, linked together by a central stalk and a peripheral stalk. During catalysis, ATP synthesis in the catalytic domain of F(1) is coupled via a rotary mechanism of the central stalk subunits to proton translocation. This protein is part of the stalk that links CF(0) to CF(1). It either transmits conformational changes from CF(0) to CF(1) or is implicated in proton conduction. This Leuconostoc citreum (strain KM20) protein is ATP synthase subunit delta.